The sequence spans 163 residues: S-fimbrial adhesin protein SfaS (163 aa).

The signal sequence occupies residues 1 to 22; it reads MKLKAIILATGLINCIAFSAQA. A disulfide bond links Cys38 and Cys75. Positions 138 to 144 are involved in sialic acid binding; that stretch reads KARAVSK.

It belongs to the fimbrial protein family.

The protein localises to the fimbrium. Its function is as follows. Fimbriae (also called pili), polar filaments radiating from the surface of the bacterium to a length of 0.5-1.5 micrometers and numbering 100-300 per cell, enable bacteria to colonize the epithelium of specific host organs. A minor fimbrial subunit, this protein is necessary for full expression of S-specific binding. S-fimbrial adhesins enable pathogenic E.coli causing urinary-tract infections or newborn meningitis to attach to glycoproteins terminating with alpha-sialic acid-(2-3)-beta-Gal. This protein binds to the alpha-sialic acid-(2-3)-beta-Gal and is thus responsible for erythrocyte recognition and hemagglutination. The chain is S-fimbrial adhesin protein SfaS (sfaS) from Escherichia coli O6:K15:H31 (strain 536 / UPEC).